A 282-amino-acid polypeptide reads, in one-letter code: 2-dehydro-3-deoxyphosphooctonate aldolase (282 aa).

It belongs to the KdsA family.

It is found in the cytoplasm. The enzyme catalyses D-arabinose 5-phosphate + phosphoenolpyruvate + H2O = 3-deoxy-alpha-D-manno-2-octulosonate-8-phosphate + phosphate. The protein operates within carbohydrate biosynthesis; 3-deoxy-D-manno-octulosonate biosynthesis; 3-deoxy-D-manno-octulosonate from D-ribulose 5-phosphate: step 2/3. It functions in the pathway bacterial outer membrane biogenesis; lipopolysaccharide biosynthesis. The polypeptide is 2-dehydro-3-deoxyphosphooctonate aldolase (Shewanella halifaxensis (strain HAW-EB4)).